Reading from the N-terminus, the 552-residue chain is Phosphoglucomutase (552 aa).

Serine 143 acts as the Phosphoserine intermediate in catalysis. Mg(2+) is bound by residues serine 143, aspartate 295, aspartate 297, and aspartate 299.

This sequence belongs to the phosphohexose mutase family. Mg(2+) is required as a cofactor.

The catalysed reaction is alpha-D-glucose 1-phosphate = alpha-D-glucose 6-phosphate. The protein operates within glycolipid metabolism; diglucosyl-diacylglycerol biosynthesis. Catalyzes the interconversion between glucose-6-phosphate and alpha-glucose-1-phosphate. This is the first step in the biosynthesis of diglucosyl-diacylglycerol (Glc2-DAG), i.e. the predominant glycolipid found in the S.aureus membrane, which is also used as a membrane anchor for lipoteichoic acid (LTA). The polypeptide is Phosphoglucomutase (pgcA) (Staphylococcus aureus (strain MSSA476)).